Reading from the N-terminus, the 131-residue chain is D-ribose pyranase (131 aa).

His-20 (proton donor) is an active-site residue. Residues Asp-28, His-98, and 120 to 122 (FSN) each bind substrate.

This sequence belongs to the RbsD / FucU family. RbsD subfamily. Homodecamer.

The protein localises to the cytoplasm. It carries out the reaction beta-D-ribopyranose = beta-D-ribofuranose. It functions in the pathway carbohydrate metabolism; D-ribose degradation; D-ribose 5-phosphate from beta-D-ribopyranose: step 1/2. In terms of biological role, catalyzes the interconversion of beta-pyran and beta-furan forms of D-ribose. In Petrotoga mobilis (strain DSM 10674 / SJ95), this protein is D-ribose pyranase.